The following is a 110-amino-acid chain: Large ribosomal subunit protein uL22 (110 aa).

It belongs to the universal ribosomal protein uL22 family. Part of the 50S ribosomal subunit.

Functionally, this protein binds specifically to 23S rRNA; its binding is stimulated by other ribosomal proteins, e.g. L4, L17, and L20. It is important during the early stages of 50S assembly. It makes multiple contacts with different domains of the 23S rRNA in the assembled 50S subunit and ribosome. Its function is as follows. The globular domain of the protein is located near the polypeptide exit tunnel on the outside of the subunit, while an extended beta-hairpin is found that lines the wall of the exit tunnel in the center of the 70S ribosome. In Exiguobacterium sibiricum (strain DSM 17290 / CCUG 55495 / CIP 109462 / JCM 13490 / 255-15), this protein is Large ribosomal subunit protein uL22.